The sequence spans 438 residues: Gamma-glutamyl phosphate reductase (438 aa).

Belongs to the gamma-glutamyl phosphate reductase family.

It is found in the cytoplasm. It catalyses the reaction L-glutamate 5-semialdehyde + phosphate + NADP(+) = L-glutamyl 5-phosphate + NADPH + H(+). It functions in the pathway amino-acid biosynthesis; L-proline biosynthesis; L-glutamate 5-semialdehyde from L-glutamate: step 2/2. Catalyzes the NADPH-dependent reduction of L-glutamate 5-phosphate into L-glutamate 5-semialdehyde and phosphate. The product spontaneously undergoes cyclization to form 1-pyrroline-5-carboxylate. The protein is Gamma-glutamyl phosphate reductase of Prochlorococcus marinus (strain NATL1A).